Reading from the N-terminus, the 229-residue chain is Prolactin (229 aa).

Positions 1 to 30 (MDNKGWSLKGSLLPLLLLVSDLLLCQGVTS) are cleaved as a signal peptide. A disulfide bridge connects residues Cys-34 and Cys-41. Phosphoserine is present on residues Ser-56, Ser-64, and Ser-120. Cystine bridges form between Cys-88–Cys-204 and Cys-221–Cys-229.

It belongs to the somatotropin/prolactin family. In terms of assembly, interacts with PRLR.

The protein resides in the secreted. Prolactin acts primarily on the mammary gland by promoting lactation. This Neovison vison (American mink) protein is Prolactin (PRL).